Here is a 301-residue protein sequence, read N- to C-terminus: Probable alpha-L-glutamate ligase (301 aa).

Residues 104-287 enclose the ATP-grasp domain; the sequence is LQLLSRRGIG…VAGMIIEHLE (184 aa). Residues K141, 178-179, D187, and 211-213 each bind ATP; these read EY and RSN. Mg(2+) contacts are provided by D248, E260, and N262. 3 residues coordinate Mn(2+): D248, E260, and N262.

It belongs to the RimK family. Mg(2+) is required as a cofactor. It depends on Mn(2+) as a cofactor.

The sequence is that of Probable alpha-L-glutamate ligase from Pseudomonas putida (strain ATCC 700007 / DSM 6899 / JCM 31910 / BCRC 17059 / LMG 24140 / F1).